Here is a 410-residue protein sequence, read N- to C-terminus: Tryptophan synthase beta chain (410 aa).

At Lys-98 the chain carries N6-(pyridoxal phosphate)lysine.

The protein belongs to the TrpB family. In terms of assembly, tetramer of two alpha and two beta chains. It depends on pyridoxal 5'-phosphate as a cofactor.

The enzyme catalyses (1S,2R)-1-C-(indol-3-yl)glycerol 3-phosphate + L-serine = D-glyceraldehyde 3-phosphate + L-tryptophan + H2O. It functions in the pathway amino-acid biosynthesis; L-tryptophan biosynthesis; L-tryptophan from chorismate: step 5/5. The beta subunit is responsible for the synthesis of L-tryptophan from indole and L-serine. The sequence is that of Tryptophan synthase beta chain from Roseobacter denitrificans (strain ATCC 33942 / OCh 114) (Erythrobacter sp. (strain OCh 114)).